Consider the following 165-residue polypeptide: LOB domain-containing protein 21 (165 aa).

One can recognise an LOB domain in the interval 10–111 (SSCAACKLLK…HDLAVARTRL (102 aa)).

It belongs to the LOB domain-containing protein family.

This Arabidopsis thaliana (Mouse-ear cress) protein is LOB domain-containing protein 21 (LBD21).